A 349-amino-acid polypeptide reads, in one-letter code: Glycerol-1-phosphate dehydrogenase [NAD(P)+] (349 aa).

NAD(+) is bound by residues 95–99 (GKSID) and 117–120 (TSPS). Residue Asp-122 coordinates substrate. Position 126 (Ser-126) interacts with NAD(+). Substrate is bound at residue Asp-169. The Zn(2+) site is built by Asp-169 and His-249. His-253 is a substrate binding site. A Zn(2+)-binding site is contributed by His-265.

The protein belongs to the glycerol-1-phosphate dehydrogenase family. Homodimer. The cofactor is Zn(2+).

The protein localises to the cytoplasm. The enzyme catalyses sn-glycerol 1-phosphate + NAD(+) = dihydroxyacetone phosphate + NADH + H(+). It carries out the reaction sn-glycerol 1-phosphate + NADP(+) = dihydroxyacetone phosphate + NADPH + H(+). Its pathway is membrane lipid metabolism; glycerophospholipid metabolism. Catalyzes the NAD(P)H-dependent reduction of dihydroxyacetonephosphate (DHAP or glycerone phosphate) to glycerol 1-phosphate (G1P). The G1P thus generated is used as the glycerophosphate backbone of phospholipids in the cellular membranes of Archaea. This is Glycerol-1-phosphate dehydrogenase [NAD(P)+] from Hyperthermus butylicus (strain DSM 5456 / JCM 9403 / PLM1-5).